A 392-amino-acid polypeptide reads, in one-letter code: Odorant receptor 9a (392 aa).

The Cytoplasmic portion of the chain corresponds to 1 to 41; the sequence is MSDKVKGKKQEEKDQSLRVQILVYRCMGIDLWSPTMANDRP. Residues 42–62 form a helical membrane-spanning segment; the sequence is WLTFVTMGPLFLFMVPMFLAA. At 63–74 the chain is on the extracellular side; sequence HEYITQVSLLSD. A helical transmembrane segment spans residues 75 to 95; sequence TLGSTFASMLTLVKFLLFCYH. Topologically, residues 96–141 are cytoplasmic; sequence RKEFVGLIYHIRAILAKEIEVWPDAREIIEVENQSDQMLSLTYTRC. The helical transmembrane segment at 142-162 threads the bilayer; sequence FGLAGIFAALKPFVGIILSSI. The Extracellular portion of the chain corresponds to 163–202; it reads RGDEIHLELPHNGVYPYDLQVVMFYVPTYLWNVMASYSAV. A helical membrane pass occupies residues 203 to 223; it reads TMALCVDSLLFFFTYNVCAIF. Residues 224 to 268 are Cytoplasmic-facing; that stretch reads KIAKHRMIHLPAVGGKEELEGLVQVLLLHQKGLQIADHIADKYRP. The helical transmembrane segment at 269 to 289 threads the bilayer; that stretch reads LIFLQFFLSALQICFIGFQVA. Residues 290 to 297 are Extracellular-facing; the sequence is DLFPNPQS. The chain crosses the membrane as a helical span at residues 298–318; that stretch reads LYFIAFVGSLLIALFIYSKCG. The Cytoplasmic segment spans residues 319–362; the sequence is ENIKSASLDFGNGLYETNWTDFSPPTKRALLIAAMRAQRPCQMK. The chain crosses the membrane as a helical span at residues 363–383; that stretch reads GYFFEASMATFSTIVRSAVSY. Topologically, residues 384–392 are extracellular; sequence IMMLRSFNA.

It belongs to the insect chemoreceptor superfamily. Heteromeric odorant receptor channel (TC 1.A.69) family. Or1a subfamily. In terms of assembly, interacts with Orco. Complexes exist early in the endomembrane system in olfactory sensory neurons (OSNs), coupling these complexes to the conserved ciliary trafficking pathway. In terms of tissue distribution, expressed in olfactory sensory neurons in the antenna.

Its subcellular location is the cell membrane. Its function is as follows. Odorant receptor which mediates acceptance or avoidance behavior, depending on its substrates. The odorant receptor repertoire encodes a large collection of odor stimuli that vary widely in identity, intensity, and duration. May form a complex with Orco to form odorant-sensing units, providing sensitive and prolonged odorant signaling and calcium permeability. This is Odorant receptor 9a (Or9a) from Drosophila melanogaster (Fruit fly).